Here is a 240-residue protein sequence, read N- to C-terminus: Myomodulin neuropeptides 2 (240 aa).

The N-terminal stretch at Met-1–Ala-23 is a signal peptide. Residues Ala-23–Arg-44 are disordered. The propeptide occupies Gln-24–Arg-44. The span at Glu-26–Ala-41 shows a compositional bias: polar residues. Leucine amide is present on residues Leu-51 and Leu-60. Propeptides (connecting peptide) lie at residues Ser-72 to Ala-81 and Gly-84 to Ser-112. The residue at position 81 (Ala-81) is an Alanine amide. Gln-115 bears the Pyrrolidone carboxylic acid mark. A Tyrosine amide modification is found at Tyr-121. Propeptides (connecting peptide) lie at residues Asp-124–Asp-147, Asp-124–Leu-148, Asp-124–Leu-149, Asp-124–Tyr-168, Asp-131–Tyr-168, Leu-149–Tyr-168, Ser-150–Tyr-168, Ser-151–Tyr-168, Ser-171–Ser-190, and Ser-171–Ser-199. Ile-207 carries the isoleucine amide modification. A propeptide spanning residues Phe-210–Lys-219 is cleaved from the precursor. Residues Gly-212–Glu-240 are disordered. Ile-226 carries the isoleucine amide modification. The propeptide occupies Gly-227–Glu-240. Residues Gly-227 to Glu-240 show a composition bias toward basic and acidic residues.

Expressed in the pedal-buccal projection neurons in the pedal ganglion.

The protein localises to the secreted. MMG2-DPs (Myomodulin gene 2-derived peptides) bias egestive feeding programs toward ingestive ones, and modulate accessory radula closer (ARC) muscle contractions. This chain is Myomodulin neuropeptides 2 (MMG2), found in Aplysia californica (California sea hare).